The following is a 173-amino-acid chain: Crossover junction endodeoxyribonuclease RuvC (173 aa).

Residues Asp8, Glu67, and Asp139 contribute to the active site. Positions 8, 67, and 139 each coordinate Mg(2+).

This sequence belongs to the RuvC family. Homodimer which binds Holliday junction (HJ) DNA. The HJ becomes 2-fold symmetrical on binding to RuvC with unstacked arms; it has a different conformation from HJ DNA in complex with RuvA. In the full resolvosome a probable DNA-RuvA(4)-RuvB(12)-RuvC(2) complex forms which resolves the HJ. Mg(2+) is required as a cofactor.

It localises to the cytoplasm. It carries out the reaction Endonucleolytic cleavage at a junction such as a reciprocal single-stranded crossover between two homologous DNA duplexes (Holliday junction).. The RuvA-RuvB-RuvC complex processes Holliday junction (HJ) DNA during genetic recombination and DNA repair. Endonuclease that resolves HJ intermediates. Cleaves cruciform DNA by making single-stranded nicks across the HJ at symmetrical positions within the homologous arms, yielding a 5'-phosphate and a 3'-hydroxyl group; requires a central core of homology in the junction. The consensus cleavage sequence is 5'-(A/T)TT(C/G)-3'. Cleavage occurs on the 3'-side of the TT dinucleotide at the point of strand exchange. HJ branch migration catalyzed by RuvA-RuvB allows RuvC to scan DNA until it finds its consensus sequence, where it cleaves and resolves the cruciform DNA. The protein is Crossover junction endodeoxyribonuclease RuvC of Vibrio cholerae serotype O1 (strain ATCC 39541 / Classical Ogawa 395 / O395).